The sequence spans 370 residues: Histidinol-phosphate aminotransferase 2 (370 aa).

Lys230 is modified (N6-(pyridoxal phosphate)lysine).

It belongs to the class-II pyridoxal-phosphate-dependent aminotransferase family. Histidinol-phosphate aminotransferase subfamily. Homodimer. Pyridoxal 5'-phosphate serves as cofactor.

The enzyme catalyses L-histidinol phosphate + 2-oxoglutarate = 3-(imidazol-4-yl)-2-oxopropyl phosphate + L-glutamate. It participates in amino-acid biosynthesis; L-histidine biosynthesis; L-histidine from 5-phospho-alpha-D-ribose 1-diphosphate: step 7/9. This chain is Histidinol-phosphate aminotransferase 2, found in Pseudomonas fluorescens (strain ATCC BAA-477 / NRRL B-23932 / Pf-5).